We begin with the raw amino-acid sequence, 824 residues long: Sphingomyelin phosphodiesterase 4 (824 aa).

Residues 777 to 797 (LAFLFIFYILGSLLSLGPLIC) traverse the membrane as a helical segment.

Mg(2+) serves as cofactor.

It is found in the endoplasmic reticulum membrane. It localises to the golgi apparatus membrane. Its subcellular location is the nucleus envelope. The protein localises to the cell membrane. The protein resides in the sarcolemma. It catalyses the reaction a sphingomyelin + H2O = phosphocholine + an N-acylsphing-4-enine + H(+). In terms of biological role, catalyzes the hydrolysis of membrane sphingomyelin to form phosphorylcholine and ceramide. It has a relevant role in the homeostasis of membrane sphingolipids, thereby influencing membrane integrity, and endoplasmic reticulum organization and function. May sensitize cells to DNA damage-induced apoptosis. In Xenopus laevis (African clawed frog), this protein is Sphingomyelin phosphodiesterase 4 (smpd4).